The primary structure comprises 564 residues: Pestheic acid cluster transcriptional regulator 3 (564 aa).

The zn(2)-C6 fungal-type DNA-binding region spans 11 to 38; it reads CWTCRLRRKKCDEGKPECTTCQALSITC. The segment at 71–123 is disordered; it reads RTSSRYRVPPGQKANPKLAPKVHAAASTPSTNTSHSTETTPPSDNGFYDTAES. The span at 97-113 shows a compositional bias: polar residues; that stretch reads STPSTNTSHSTETTPPS.

Its subcellular location is the nucleus. In terms of biological role, transcription factor that, with ptaR1 and ptaR2, coregulates the expression of the gene cluster that mediates the biosynthesis of pestheic acid, a diphenyl ether which is a biosynthetic precursor of the unique chloropupukeananes. In Pestalotiopsis fici (strain W106-1 / CGMCC3.15140), this protein is Pestheic acid cluster transcriptional regulator 3.